Consider the following 576-residue polypeptide: MTKSNISKDNGPLDEVEGIKERSNFLRGTIAEGLEDRITGAISDEDNKLLKFHGSYQQDDRDLRDERRRKKLEPAYQFMIRVRTPGGVTTPEQWLVMDDLAHKYANGSMRLTTRQTFQLHGIVKWDLKKTMQGMNQALMTTIAACGDINRNVMCNVNPEQSDVHAEVYEWSKKVSDHLLPETNAYHEIWLEDKKIVDSREESEPIYGSTYLPRKFKIGIAVPPSNDIDIYSQDLGFIAIVEEGKLLGFNVAVGGGMGMTHGDTNTYPQISRVIGFCVPEKVTEVAEKVVTIQRDFGNRSNRKNARFKYTIDSRGIDWFIDELNERLGWELEGKRHYEFDSNGDSYGWIEGKDYWHLTLFIQNGRIKDVEDYPLMTGLREIAKVHTGDFRLTPNQNLIIANVSSDNKKQINDLVEKFNLTEGKTYSGLRRNSMACVAFPTCGLAMAESERYLPELLDKIEVILDESGLREEEIVIRMSGCPNGCSRPALAEIAFIGKAPGKYNMYLGGSFNGSRLNKLYKENIGEEEILNTLRPIFIDFAKDKQKDEHFGDFVIRAGYVEEVKSGLDFHSSKEDVRS.

[4Fe-4S] cluster contacts are provided by cysteine 434, cysteine 440, cysteine 479, and cysteine 483. Residue cysteine 483 coordinates siroheme.

The protein belongs to the nitrite and sulfite reductase 4Fe-4S domain family. In terms of assembly, alpha(8)-beta(8). The alpha component is a flavoprotein, the beta component is a hemoprotein. Requires siroheme as cofactor. It depends on [4Fe-4S] cluster as a cofactor.

The enzyme catalyses hydrogen sulfide + 3 NADP(+) + 3 H2O = sulfite + 3 NADPH + 4 H(+). The protein operates within sulfur metabolism; hydrogen sulfide biosynthesis; hydrogen sulfide from sulfite (NADPH route): step 1/1. Component of the sulfite reductase complex that catalyzes the 6-electron reduction of sulfite to sulfide. This is one of several activities required for the biosynthesis of L-cysteine from sulfate. The polypeptide is Sulfite reductase [NADPH] hemoprotein beta-component (Oceanobacillus iheyensis (strain DSM 14371 / CIP 107618 / JCM 11309 / KCTC 3954 / HTE831)).